Here is a 400-residue protein sequence, read N- to C-terminus: NADH-quinone oxidoreductase subunit D (400 aa).

The protein belongs to the complex I 49 kDa subunit family. NDH-1 is composed of 14 different subunits. Subunits NuoB, C, D, E, F, and G constitute the peripheral sector of the complex.

It is found in the cell inner membrane. The enzyme catalyses a quinone + NADH + 5 H(+)(in) = a quinol + NAD(+) + 4 H(+)(out). NDH-1 shuttles electrons from NADH, via FMN and iron-sulfur (Fe-S) centers, to quinones in the respiratory chain. The immediate electron acceptor for the enzyme in this species is believed to be ubiquinone. Couples the redox reaction to proton translocation (for every two electrons transferred, four hydrogen ions are translocated across the cytoplasmic membrane), and thus conserves the redox energy in a proton gradient. In Granulibacter bethesdensis (strain ATCC BAA-1260 / CGDNIH1), this protein is NADH-quinone oxidoreductase subunit D.